A 284-amino-acid chain; its full sequence is Pantothenate synthetase (284 aa).

30-37 provides a ligand contact to ATP; sequence MGNLHDGH. The active-site Proton donor is histidine 37. Glutamine 61 is a (R)-pantoate binding site. Beta-alanine is bound at residue glutamine 61. ATP is bound at residue 149-152; it reads GEKD. Position 155 (glutamine 155) interacts with (R)-pantoate. Residues isoleucine 178 and 186–189 each bind ATP; that span reads LSSR.

This sequence belongs to the pantothenate synthetase family. As to quaternary structure, homodimer.

It is found in the cytoplasm. The catalysed reaction is (R)-pantoate + beta-alanine + ATP = (R)-pantothenate + AMP + diphosphate + H(+). It functions in the pathway cofactor biosynthesis; (R)-pantothenate biosynthesis; (R)-pantothenate from (R)-pantoate and beta-alanine: step 1/1. Catalyzes the condensation of pantoate with beta-alanine in an ATP-dependent reaction via a pantoyl-adenylate intermediate. This is Pantothenate synthetase from Salmonella choleraesuis (strain SC-B67).